Here is a 789-residue protein sequence, read N- to C-terminus: Cadherin-10 (789 aa).

Positions 1 to 22 (MTIQQVLLLLLLWMWLLHPCRT) are cleaved as a signal peptide. Positions 23-54 (EMLFRRTPDLRPKGFVGRTSGSDGKALHRQKR) are excised as a propeptide. Cadherin domains are found at residues 55–160 (GWMW…EPTF), 161–269 (PEEI…PPRF), 270–384 (PQST…PPVF), 385–487 (SRSS…DNAP), and 488–606 (QFAV…LLLP). Residues 55 to 606 (GWMWNQFFLL…SCNAEALLLP (552 aa)) are Extracellular-facing. Asn-256 carries N-linked (GlcNAc...) asparagine glycosylation. 3 N-linked (GlcNAc...) asparagine glycosylation sites follow: Asn-438, Asn-456, and Asn-534. The chain crosses the membrane as a helical span at residues 607–634 (AGLSTGALIAILLCIIILLVIVVLFAAL). Topologically, residues 635–789 (KRQRKKEPLI…GGGESDKDAS (155 aa)) are cytoplasmic.

It localises to the cell membrane. Its function is as follows. Cadherins are calcium-dependent cell adhesion proteins. They preferentially interact with themselves in a homophilic manner in connecting cells; cadherins may thus contribute to the sorting of heterogeneous cell types. This is Cadherin-10 (CDH10) from Gallus gallus (Chicken).